The sequence spans 3122 residues: Abnormal spindle-like microcephaly-associated protein homolog (3122 aa).

Disordered regions lie at residues 1-26 (MATMQAASCPEERGRRARPDPEAGDP) and 139-169 (KRSLWNTSKKIPASSKHTKRTSKNQHFNESF). Residues 10–21 (PEERGRRARPDP) show a composition bias toward basic and acidic residues. Positions 289–388 (STQTQIHFLS…KDSMGHVGQQ (100 aa)) are sufficient for interaction with KATNA1:KATNB1. Residues S348, S373, and S573 each carry the phosphoserine modification. Positions 579–600 (PSTVARTTKKEGHTSKRISSLE) are disordered. The region spanning 888–1024 (KASKELLLAF…LLWKIALAFQ (137 aa)) is the Calponin-homology (CH) 1 domain. A coiled-coil region spans residues 1025-1045 (VDISLNLDQLKEEIDFLKHTH). Position 1071 is a phosphoserine (S1071). A Calponin-homology (CH) 2 domain is found at 1078–1229 (GDSVQLLMDW…YLSFLCARLL (152 aa)). IQ domains lie at 1234-1263 (EIRAARLIQTTWRKYKLKRDLKHHQERDKA), 1315-1346 (QNKSAVLIQAYWRRYSTRKRFLRLKHYSVILQ), 1410-1439 (QTKAAVTLQRAFREWHLRKQIRERSAVVIQ), 1504-1535 (KRAATIRLQAAFRGMKARHSYRLQIGAACVLQ), 1550-1579 (LKKMVIKLQAHIRKYQQLQKYKKIKKAAIT), 1600-1629 (TRSSVIVLQSACRGMQARKAFRHALASVIK), 1623-1652 (ALASVIKIQSYYRAYICRKTFQNFKNATIK), 1696-1725 (VRESCIKLQSHFRGCLVRKQLRLQCKAAIS), 1719-1750 (QCKAAISLQSYFRMRTARQRYLKMCKAALVIQ), 1769-1798 (VKRAAICLQAAYRGCKVRRQIKQQSTAAVT), 1792-1821 (QSTAAVTIQRVFRGHSQRMKYQTMLQSAVK), 1842-1871 (TREAVVCLQSAYRGWQVRQQLRRQHEAAVK), 1865-1896 (QHEAAVKIQSTFRMAVAQQQYKLLRAAAAVIQ), 1915-1946 (LRHAALVFQAAWKGKMLRRQIARQHQCAALIQ), 1938-1967 (QHQCAALIQSYYRMHIQRRKWSIMKTAALQ), 1988-2017 (TKAAVVTLQSAYRGMKVRKRVAECHKAAVT), 2011-2042 (CHKAAVTIQSKFRAYRTQKKYTTYRTSAIVIQ), 2061-2092 (LRRAAVQVQAAYRGIRVRRRIQHMHMAATLIE), 2134-2165 (TLKAIKTLQAGVRGARVRRTVRKMHFAATLIQ), 2157-2188 (MHFAATLIQSHFRGHRQQTYFHRLRKAATMVQ), 2207-2238 (LRRSVLLIQAAFRGLRTRRHLKAMHLAATLIQ), 2230-2261 (MHLAATLIQRRFRTFAMRRKFLSLRKTAIWIQ), 2279-2310 (LEKAVIKIQSSYRGWVVRKRVQKMHRAATVIQ), 2302-2333 (MHRAATVIQATFRMHGAYMRYQHLKRASVVIQ), 2343-2374 (QKHAAVILQAAVRGMKTRSHLKTMHSSATLIQ), 2366-2397 (MHSSATLIQSQFRAFIVRRRFIALRKAAIFVQ), 2416-2447 (LRKAAITIQSSYRRLMVQKKLQEMHRAAALIQ), 2491-2522 (QHSAAVLIQSTYRMYRQRCFYQQRRWAAKVIQ), 2602-2633 (KVEAACRIQAWYRRWRAHKKYLTLLKAVNIIE), 2674-2705 (RHRAACVIQAHFRGYQARQSFLQQRSAVLIIQ), 2724-2755 (LKKSTVVVQALVRGWLVRKRVSEQKAKTRLFH), and 2849-2880 (ITSCATRIQALWRGYSWRKKNDHTEIKAIRRS).

In terms of assembly, interacts with KATNA1 and KATNB1; katanin complex formation KATNA1:KATNB1 is required for the association. In terms of tissue distribution, expressed in fetal brain, peripheral nervous system, liver and spleen. In the adult, expressed exclusively in testis, ovary and spleen.

It localises to the cytoplasm. The protein localises to the cytoskeleton. The protein resides in the spindle. Its subcellular location is the nucleus. Functionally, involved in mitotic spindle regulation and coordination of mitotic processes. The function in regulating microtubule dynamics at spindle poles including spindle orientation, astral microtubule density and poleward microtubule flux seem to depend on its association with the katanin complex formed by KATNA1 and KATNB1. Enhances the microtubule lattice severing activity of KATNA1 by recruiting the katanin complex to microtubules. Can block microtubule minus-end growth and reversely this function can be enhanced by the katanin complex. May have a preferential role in regulating neurogenesis. The sequence is that of Abnormal spindle-like microcephaly-associated protein homolog (Aspm) from Mus musculus (Mouse).